The primary structure comprises 465 residues: UDP-N-acetylmuramate--L-alanine ligase (465 aa).

115–121 (GTHGKTT) provides a ligand contact to ATP.

This sequence belongs to the MurCDEF family.

The protein localises to the cytoplasm. It catalyses the reaction UDP-N-acetyl-alpha-D-muramate + L-alanine + ATP = UDP-N-acetyl-alpha-D-muramoyl-L-alanine + ADP + phosphate + H(+). It functions in the pathway cell wall biogenesis; peptidoglycan biosynthesis. In terms of biological role, cell wall formation. This is UDP-N-acetylmuramate--L-alanine ligase from Renibacterium salmoninarum (strain ATCC 33209 / DSM 20767 / JCM 11484 / NBRC 15589 / NCIMB 2235).